The chain runs to 294 residues: MKTKIIVIVGPTAVGKTALAIEVAKCFNGEVVSGDSQQVYRGLDIGTAKASPEEQAAVPHHLIDVREITESYSAFDFVSEAKMTIEDIHSRGKLAIIAGGTGLYIQSLLEGYHLGGETPHEEILAYRASLEPYSDEELAHLVEQAGLEIPQFNRRRAMRALEIAHFGQDLENQEILYEPLIICLDDERSQLYERINHRVDLMFEAGLLDEAKWLFDHSPNVQAAKGIGYKELFPYFRGEQTFEEARESLKQATRRFAKRQLTWFRNRMQVTFYQIGESGVQDRILSQIEEFLDD.

ATP is bound at residue 10-17 (GPTAVGKT). 12-17 (TAVGKT) contributes to the substrate binding site. The interaction with substrate tRNA stretch occupies residues 35–38 (DSQQ).

It belongs to the IPP transferase family. In terms of assembly, monomer. The cofactor is Mg(2+).

It carries out the reaction adenosine(37) in tRNA + dimethylallyl diphosphate = N(6)-dimethylallyladenosine(37) in tRNA + diphosphate. Catalyzes the transfer of a dimethylallyl group onto the adenine at position 37 in tRNAs that read codons beginning with uridine, leading to the formation of N6-(dimethylallyl)adenosine (i(6)A). The protein is tRNA dimethylallyltransferase of Streptococcus pneumoniae (strain P1031).